The chain runs to 161 residues: MPSMDIVSEVNEVELRNAVDNTRRELDSRFDFRGVESEVSYKDHQVTLSSESDFQCQQMVDMLRNQLSKRNVDPASMDVAEKAIHSGKTFSLKVTFKEGIDSLVAKKLVKLIKDSKLKVQAAIQGDSIRVTGKKRDDLQAVMAIARESDLGQPFQFNNFRD.

Belongs to the YajQ family.

In terms of biological role, nucleotide-binding protein. The protein is Nucleotide-binding protein Shew_2893 of Shewanella loihica (strain ATCC BAA-1088 / PV-4).